Reading from the N-terminus, the 99-residue chain is Large ribosomal subunit protein eL42 (99 aa).

Belongs to the eukaryotic ribosomal protein eL42 family.

This Chlamydomonas reinhardtii (Chlamydomonas smithii) protein is Large ribosomal subunit protein eL42 (RPL44).